We begin with the raw amino-acid sequence, 215 residues long: Probable transaldolase (215 aa).

Catalysis depends on K83, which acts as the Schiff-base intermediate with substrate.

This sequence belongs to the transaldolase family. Type 3B subfamily.

It is found in the cytoplasm. It catalyses the reaction D-sedoheptulose 7-phosphate + D-glyceraldehyde 3-phosphate = D-erythrose 4-phosphate + beta-D-fructose 6-phosphate. It functions in the pathway carbohydrate degradation; pentose phosphate pathway; D-glyceraldehyde 3-phosphate and beta-D-fructose 6-phosphate from D-ribose 5-phosphate and D-xylulose 5-phosphate (non-oxidative stage): step 2/3. Transaldolase is important for the balance of metabolites in the pentose-phosphate pathway. In Desulforapulum autotrophicum (strain ATCC 43914 / DSM 3382 / VKM B-1955 / HRM2) (Desulfobacterium autotrophicum), this protein is Probable transaldolase.